Here is a 64-residue protein sequence, read N- to C-terminus: Large ribosomal subunit protein uL29 (64 aa).

This sequence belongs to the universal ribosomal protein uL29 family.

The sequence is that of Large ribosomal subunit protein uL29 from Ligilactobacillus salivarius (strain UCC118) (Lactobacillus salivarius).